Here is a 275-residue protein sequence, read N- to C-terminus: NH(3)-dependent NAD(+) synthetase (275 aa).

Position 50 to 57 (50 to 57) interacts with ATP; it reads GISGGVDS. Aspartate 56 lines the Mg(2+) pocket. Arginine 147 lines the deamido-NAD(+) pocket. Threonine 167 is a binding site for ATP. Glutamate 172 provides a ligand contact to Mg(2+). Positions 180 and 187 each coordinate deamido-NAD(+). ATP contacts are provided by lysine 196 and threonine 218. 267–268 contacts deamido-NAD(+); it reads HK.

Belongs to the NAD synthetase family. Homodimer.

It carries out the reaction deamido-NAD(+) + NH4(+) + ATP = AMP + diphosphate + NAD(+) + H(+). It participates in cofactor biosynthesis; NAD(+) biosynthesis; NAD(+) from deamido-NAD(+) (ammonia route): step 1/1. Catalyzes the ATP-dependent amidation of deamido-NAD to form NAD. Uses ammonia as a nitrogen source. The polypeptide is NH(3)-dependent NAD(+) synthetase (Pseudomonas fluorescens (strain Pf0-1)).